Reading from the N-terminus, the 117-residue chain is Minor capsid protein VP2 (117 aa).

The protein belongs to the lagovirus VP2 protein family. Homooligomer. The portal-like structure consists in 12 copies of VP2. Interacts with capsid protein VP1.

Its subcellular location is the virion. The protein localises to the host cytoplasm. Minor structural protein that forms a portal-like structure at a unique three-fold axis of symmetry, following binding to the host receptor. The channel formed by VP2 may allow the delivery of the viral genome through the host endosomal membrane. This is Minor capsid protein VP2 from Oryctolagus cuniculus (Rabbit).